A 200-amino-acid chain; its full sequence is MTVVIGLTGGIASGKSTVSQMFRELSIPVIDADIIAREVVEKGKPAYNKIVEVFGTEVLQEDGELDRPKLGSVVFYNEEKRLQLNKIVHPAVREEMNRQKEMYIKEGMQAVVLDIPLLFESKLTSLVDRVLVVAVKPHTQLERLMKRNNFSEEEATARIQSQMPLEEKVKNADEVINNDGTIMGTKTQLQAILKKWNIID.

Residues 4 to 200 enclose the DPCK domain; the sequence is VIGLTGGIAS…AILKKWNIID (197 aa). 12 to 17 is a binding site for ATP; that stretch reads ASGKST.

This sequence belongs to the CoaE family.

Its subcellular location is the cytoplasm. The catalysed reaction is 3'-dephospho-CoA + ATP = ADP + CoA + H(+). The protein operates within cofactor biosynthesis; coenzyme A biosynthesis; CoA from (R)-pantothenate: step 5/5. In terms of biological role, catalyzes the phosphorylation of the 3'-hydroxyl group of dephosphocoenzyme A to form coenzyme A. The protein is Dephospho-CoA kinase of Bacillus anthracis.